A 1210-amino-acid polypeptide reads, in one-letter code: ATP-dependent helicase/nuclease subunit A (1210 aa).

Residues Q27–Q483 form the UvrD-like helicase ATP-binding domain. A48 to T55 is an ATP binding site. Residues Q512–G798 enclose the UvrD-like helicase C-terminal domain.

It belongs to the helicase family. AddA subfamily. Heterodimer of AddA and AddB/RexB. Requires Mg(2+) as cofactor.

It carries out the reaction Couples ATP hydrolysis with the unwinding of duplex DNA by translocating in the 3'-5' direction.. The catalysed reaction is ATP + H2O = ADP + phosphate + H(+). Functionally, the heterodimer acts as both an ATP-dependent DNA helicase and an ATP-dependent, dual-direction single-stranded exonuclease. Recognizes the chi site generating a DNA molecule suitable for the initiation of homologous recombination. The AddA nuclease domain is required for chi fragment generation; this subunit has the helicase and 3' -&gt; 5' nuclease activities. The chain is ATP-dependent helicase/nuclease subunit A from Streptococcus pyogenes serotype M5 (strain Manfredo).